A 371-amino-acid chain; its full sequence is 3-methyl-D-ornithine--L-lysine ligase (371 aa).

Residue Lys-18 coordinates ATP. 19–20 (LQ) lines the L-lysine pocket. ATP contacts are provided by residues Asp-39, 57 to 58 (NI), and 80 to 81 (EN). An L-lysine-binding site is contributed by Glu-80. The 185-residue stretch at 93–277 (EKFSCPVLFD…LIELLFRAFN (185 aa)) folds into the ATP-grasp domain. ADP-binding positions include Lys-112, Lys-139, Ser-146, and 168-171 (EEYV). Residues 177-179 (SLE) and Asp-233 contribute to the D-ornithine site. The Mg(2+) site is built by Glu-235, Glu-247, and Asp-249. Glu-247 provides a ligand contact to ADP. D-ornithine is bound by residues 251 to 256 (RFPSQT) and Glu-310. Residues Ser-254 and Glu-310 each contribute to the L-lysine site.

Belongs to the PylC family. It depends on Mg(2+) as a cofactor.

The enzyme catalyses (3R)-3-methyl-D-ornithine + L-lysine + ATP = (3R)-3-methyl-D-ornithyl-N(6)-L-lysine + ADP + phosphate + H(+). It participates in amino-acid biosynthesis; L-pyrrolysine biosynthesis. Functionally, is required for the biosynthesis of pyrrolysine. Catalyzes the ATP-dependent ligation between (3R)-3-methyl-D-ornithine and L-lysine, leading to (3R)-3-methyl-D-ornithyl-N6-L-lysine. Is also involved in the synthesis of pyrroline-carboxy-lysine (Pcl), a demethylated form of pyrrolysine that is generated by the pyrrolysine biosynthetic enzymes when the growth media is supplemented with D-ornithine. The polypeptide is 3-methyl-D-ornithine--L-lysine ligase (Methanosarcina mazei (strain ATCC BAA-159 / DSM 3647 / Goe1 / Go1 / JCM 11833 / OCM 88) (Methanosarcina frisia)).